Reading from the N-terminus, the 263-residue chain is 4-hydroxy-2-oxo-heptane-1,7-dioate aldolase (263 aa).

Catalysis depends on histidine 45, which acts as the Proton acceptor. Glutamine 147 is a substrate binding site. A divalent metal cation is bound at residue glutamate 149. The substrate site is built by alanine 174 and aspartate 175. Residue aspartate 175 participates in a divalent metal cation binding.

Belongs to the HpcH/HpaI aldolase family. Homohexamer; trimer of dimers. Requires a divalent metal cation as cofactor.

It catalyses the reaction 4-hydroxy-2-oxoheptanedioate = succinate semialdehyde + pyruvate. It functions in the pathway aromatic compound metabolism; 4-hydroxyphenylacetate degradation; pyruvate and succinate semialdehyde from 4-hydroxyphenylacetate: step 7/7. In terms of biological role, catalyzes the reversible retro-aldol cleavage of 4-hydroxy-2-ketoheptane-1,7-dioate (HKHD) to pyruvate and succinic semialdehyde. This Salmonella newport (strain SL254) protein is 4-hydroxy-2-oxo-heptane-1,7-dioate aldolase.